The sequence spans 419 residues: rRNA methyltransferase 3, mitochondrial (419 aa).

A mitochondrion-targeting transit peptide spans 1 to 39; it reads MAALCGGMLRGCILKPLGLSGSLQLKRNVRALRRTPVRV. A disordered region spans residues 42–68; sequence ADEEGRERKQVEASRQRQPRQNESQAC. The span at 44 to 56 shows a compositional bias: basic and acidic residues; sequence EEGRERKQVEASR. S-adenosyl-L-methionine-binding residues include G357, I381, and L390.

It belongs to the class IV-like SAM-binding methyltransferase superfamily. RNA methyltransferase TrmH family.

The protein resides in the mitochondrion. It carries out the reaction a uridine in rRNA + S-adenosyl-L-methionine = a 2'-O-methyluridine in rRNA + S-adenosyl-L-homocysteine + H(+). S-adenosyl-L-methionine-dependent 2'-O-ribose methyltransferase that catalyzes the formation of 2'-O-methylguanosine at position 1370 (Gm1370) in the mitochondrial large subunit ribosomal RNA (mtLSU rRNA), a conserved modification in the peptidyl transferase domain of the mtLSU rRNA. Also required for formation of 2'-O-methyluridine at position 1369 (Um1369) mediated by MRM2. This is rRNA methyltransferase 3, mitochondrial from Xenopus laevis (African clawed frog).